The sequence spans 1095 residues: MSVWNYVVTAHKPTNVTHSCVGNFTGPQELNLIIAKCTRIEIHLLTPQGLQCICLQPMLDVPIYGRIATLELFRPHGETQDLLFIATERYKFCVLQWDTEASEVITRAMGDVSDRIGRPTDNGQIGIIDPDCRLIGLHLYDGLFKVIPFDNKGQLKEAFNIRLEELQVLDIKFLYGCPKPTIVVLYQDNKDARHVKTYEVSLKDKDFIEGPWAQNNLDNGASLLIPVPPPLCGVLIIGEETIVYCSASAFKAIPIRPSITRAYGRVDADGSRYLLGDHNGLLHLLVITHEKEKVTGLKIELLGETSIASTISYLDNAFVFIGSSYGDSQLVKLNLQPDTKGSYVEVLERYVNLGPIVDFCVVDLERQGQGQVVTCSGAYKDGSLRIVRNGIGINEQASVELQGIKGMWSLRSATDDPYDTFLVVSFISETRVLAMNLEDELEETEIEGFNSQVQTLFCHDAVYNQLVQVTSNSVRLVSSTSRDLKNEWFAPVGYSVNVATANATQVLLATGGGHLVYLEIGDGVLNEVKYAKLDYDISCLDINPIGENPNYSNIAAVGMWTDISVRIYSLPDLNLITKEQLGGEIIPRSVLMCSFEGISYLLCALGDGHLLNFVLSMSTGELTDRKKVSLGTQPITLRTFSSKDTTHVFAASDRPTVIYSSNKKLLYSNVNLKEVSHMCPFNVAAFPDSLAIAKEGELTIGTIDEIQKLHIRSIPLGEHARRISHQEQTRTFALCSVKYTQSNADDPEMHFVRLLDDQTFEFISTYPLDQFEYGCSILSCSFSDDSNVYYCIGTAYVMPEENEPTKGRILVFIVEDGKLQLIAEKETKGAVYSLNAFNGKLLAAINQKIQLYKWASREDGGSRELQTECGHHGHILALYVQTRGDFIVVGDLMKSISLLIFKHEEGAIEERARDYNANWMSAVEILDDDIYLGAENNFNLFTVRKNSEGATDEERSRLEVVGEYHLGEFVNRFRHGSLVMRLPDSDVGQIPTVIFGTVNGVIGVIASLPHDQYLFLEKLQTNLRKVIKGVGGLSHEQWRSFYNEKKTVDAKNFLDGDLIESFLDLSRNRMEEISKAMSVPVEELMKRVEELTRLH.

The protein belongs to the DDB1 family. As to quaternary structure, probable component of the CDD complex, which probably also contains DET1.

It localises to the nucleus. It participates in protein modification; protein ubiquitination. Component of light signal transduction machinery. Involved in fruit pigmentation and fruit nutritional quality. Acts as a negative regulator of fruit pigmentation. Probably acts by participating in the CDD complex, a complex probably required to regulate the activity of ubiquitin conjugating enzymes. Repression of photomorphogenesis is probably mediated by ubiquitination and subsequent degradation of photomorphogenesis-promoting factors such as HY5. In Solanum cheesmaniae (Galapagos Island tomato), this protein is DNA damage-binding protein 1 (DDB1).